We begin with the raw amino-acid sequence, 427 residues long: Enolase (427 aa).

Gln-163 provides a ligand contact to (2R)-2-phosphoglycerate. The Proton donor role is filled by Glu-205. Residues Asp-242, Glu-285, and Asp-312 each contribute to the Mg(2+) site. (2R)-2-phosphoglycerate contacts are provided by Lys-337, Arg-366, Ser-367, and Lys-388. Catalysis depends on Lys-337, which acts as the Proton acceptor.

Belongs to the enolase family. The cofactor is Mg(2+).

It localises to the cytoplasm. It is found in the secreted. The protein localises to the cell surface. The enzyme catalyses (2R)-2-phosphoglycerate = phosphoenolpyruvate + H2O. It functions in the pathway carbohydrate degradation; glycolysis; pyruvate from D-glyceraldehyde 3-phosphate: step 4/5. Catalyzes the reversible conversion of 2-phosphoglycerate (2-PG) into phosphoenolpyruvate (PEP). It is essential for the degradation of carbohydrates via glycolysis. This is Enolase from Burkholderia multivorans (strain ATCC 17616 / 249).